Reading from the N-terminus, the 368-residue chain is tRNA-specific 2-thiouridylase MnmA (368 aa).

ATP is bound by residues 12–19 (AMSGGVDS) and Met-38. Residues 98-100 (NPD) are interaction with target base in tRNA. Cys-103 (nucleophile) is an active-site residue. An intrachain disulfide couples Cys-103 to Cys-200. Position 128 (Gly-128) interacts with ATP. The interval 150–152 (KDQ) is interaction with tRNA. Catalysis depends on Cys-200, which acts as the Cysteine persulfide intermediate. Positions 312 to 313 (RY) are interaction with tRNA.

The protein belongs to the MnmA/TRMU family. In terms of assembly, interacts with TusE.

Its subcellular location is the cytoplasm. The enzyme catalyses S-sulfanyl-L-cysteinyl-[protein] + uridine(34) in tRNA + AH2 + ATP = 2-thiouridine(34) in tRNA + L-cysteinyl-[protein] + A + AMP + diphosphate + H(+). Its function is as follows. Catalyzes the 2-thiolation of uridine at the wobble position (U34) of tRNA(Lys), tRNA(Glu) and tRNA(Gln), leading to the formation of s(2)U34, the first step of tRNA-mnm(5)s(2)U34 synthesis. Sulfur is provided by IscS, via a sulfur-relay system. Binds ATP and its substrate tRNAs. This chain is tRNA-specific 2-thiouridylase MnmA, found in Buchnera aphidicola subsp. Acyrthosiphon pisum (strain APS) (Acyrthosiphon pisum symbiotic bacterium).